Reading from the N-terminus, the 771-residue chain is Post-GPI attachment to proteins factor 6 (771 aa).

The signal sequence occupies residues 1 to 34; sequence MGRAGTGTGGEAVAAVVAGPLLLLLLARPPPASA. Residues 35 to 545 lie on the Extracellular side of the membrane; the sequence is GYSGKSEVGL…STAQTVAQQR (511 aa). N144 is a glycosylation site (N-linked (GlcNAc...) asparagine). The disordered stretch occupies residues 322–343; it reads FNASSGLLSPSPDHQDLGRSGR. A compositionally biased stretch (basic and acidic residues) spans 334–343; it reads DHQDLGRSGR. 2 N-linked (GlcNAc...) asparagine glycosylation sites follow: N407 and N431. In terms of domain architecture, EGF-like spans 497–533; the sequence is PCLNDCGPYGQCLLLRRHSYLYASCSCKAGWRGWSCT. 3 disulfides stabilise this stretch: C498-C508, C502-C521, and C523-C532. A helical membrane pass occupies residues 546-566; it reads AATLLLTLSNLMFLAPIAVSV. Residues 567–568 are Cytoplasmic-facing; that stretch reads RR. Residues 569–589 form a helical membrane-spanning segment; sequence FFLVEASVYAYTMFFSTFYHA. Topologically, residues 590–605 are extracellular; that stretch reads CDQPGEAVLCILSYDT. Residues 606-626 form a helical membrane-spanning segment; sequence LQYCDFLGSGAAIWVTILCMA. The Cytoplasmic portion of the chain corresponds to 627–629; sequence RLK. Residues 630 to 650 traverse the membrane as a helical segment; it reads TVLKYVLFLLGTLVIAMSLQL. Over 651-653 the chain is Extracellular; sequence DRR. Residues 654–674 traverse the membrane as a helical segment; it reads GMWNMLGPCLFAFVIMASMWA. The Cytoplasmic portion of the chain corresponds to 675–690; sequence YRCGHRRQCYPTSWQR. A helical transmembrane segment spans residues 691 to 711; the sequence is WAFYLLPGVSMASVGIAIYTS. At 712–717 the chain is on the extracellular side; that stretch reads MMTSDN. The helical transmembrane segment at 718–738 threads the bilayer; sequence YYYTHSIWHILLAGSAALLLP. Over 739-771 the chain is Cytoplasmic; the sequence is PPDQPAEPWACSQKFPCHYQICKNDREELYAVT.

The protein belongs to the TMEM8 family. Glycosylated. As to expression, expressed in pancreas, placenta, spleen, liver, kidney, bone marrow, peripheral blood leukocytes and tonsil.

The protein resides in the cell membrane. It is found in the lysosome membrane. It catalyses the reaction a 1,2-diacyl-sn-glycero-3-phosphocholine + H2O = a 1-acyl-sn-glycero-3-phosphocholine + a fatty acid + H(+). Its function is as follows. Involved in the lipid remodeling steps of GPI-anchor maturation. Lipid remodeling steps consist in the generation of 2 saturated fatty chains at the sn-2 position of GPI-anchor proteins (GPI-AP). Has phospholipase A2 activity that removes an acyl-chain at the sn-2 position of GPI-anchors during the remodeling of GPI. Required for the shedding of the GPI-AP CRIPTO, but not CFC1, at the cell surface. Shedding of CRIPTO modulates Nodal signaling by allowing soluble CRIPTO to act as a Nodal coreceptor on other cells. Also indirectly involved in the translocation of RAC1 from the cytosol to the plasma membrane by maintaining the steady state amount of CAV1-enriched plasma membrane subdomains, stabilizing RAC1 at the plasma membrane. In contrast to myomaker (TMEM8C), has no fusogenic activity. This chain is Post-GPI attachment to proteins factor 6, found in Homo sapiens (Human).